Reading from the N-terminus, the 219-residue chain is Probable GTP-binding protein EngB (219 aa).

In terms of domain architecture, EngB-type G spans 31-205; that stretch reads VGVEIAFAGR…LSILNEWCHP (175 aa). GTP contacts are provided by residues 39 to 46, 66 to 70, 84 to 87, 151 to 154, and 184 to 186; these read GRSNAGKS, GRTQL, DLPG, TKSD, and FSA. Mg(2+)-binding residues include S46 and T68.

Belongs to the TRAFAC class TrmE-Era-EngA-EngB-Septin-like GTPase superfamily. EngB GTPase family. Mg(2+) serves as cofactor.

Functionally, necessary for normal cell division and for the maintenance of normal septation. In Shewanella sp. (strain MR-7), this protein is Probable GTP-binding protein EngB.